The following is a 1033-amino-acid chain: RNA cytidine acetyltransferase (1033 aa).

ATP-binding positions include 285–294 (GRGKSAALGL) and arginine 465. The N-acetyltransferase domain occupies 560 to 694 (VDLKNPKLPD…IHVRDAKTMP (135 aa)). Residues 626-628 (IAV), 633-639 (VKMGYGT), and arginine 727 each bind acetyl-CoA. Residues 988–1033 (ENQIQKTNGKGARVVSIKGEKRKNNSLDASDKKTKEKPSSKKKFRK) form a disordered region. Positions 1005–1026 (KGEKRKNNSLDASDKKTKEKPS) are enriched in basic and acidic residues.

Belongs to the RNA cytidine acetyltransferase family. NAT10 subfamily. Interacts with tan1.

The protein resides in the nucleus. The protein localises to the nucleolus. The enzyme catalyses a cytidine in 18S rRNA + acetyl-CoA + ATP + H2O = an N(4)-acetylcytidine in 18S rRNA + ADP + phosphate + CoA + H(+). It catalyses the reaction a cytidine in tRNA + acetyl-CoA + ATP + H2O = an N(4)-acetylcytidine in tRNA + ADP + phosphate + CoA + H(+). Functionally, RNA cytidine acetyltransferase with specificity toward both 18S rRNA and tRNAs. Catalyzes the formation of N(4)-acetylcytidine (ac4C) at positions 1297 and 1815 in 18S rRNA. Required for early nucleolar cleavages of precursor rRNA at sites A0, A1 and A2 during 18S rRNA synthesis. Catalyzes the formation of ac4C in serine and leucine tRNAs. Requires the tRNA-binding adapter protein tan1 for full tRNA acetyltransferase activity but not for 18S rRNA acetylation. This is RNA cytidine acetyltransferase from Schizosaccharomyces pombe (strain 972 / ATCC 24843) (Fission yeast).